A 182-amino-acid polypeptide reads, in one-letter code: ATP synthase subunit delta (182 aa).

Belongs to the ATPase delta chain family. As to quaternary structure, F-type ATPases have 2 components, F(1) - the catalytic core - and F(0) - the membrane proton channel. F(1) has five subunits: alpha(3), beta(3), gamma(1), delta(1), epsilon(1). CF(0) has four main subunits: a(1), b(1), b'(1) and c(10-14). The alpha and beta chains form an alternating ring which encloses part of the gamma chain. F(1) is attached to F(0) by a central stalk formed by the gamma and epsilon chains, while a peripheral stalk is formed by the delta, b and b' chains.

The protein localises to the cellular thylakoid membrane. Functionally, f(1)F(0) ATP synthase produces ATP from ADP in the presence of a proton or sodium gradient. F-type ATPases consist of two structural domains, F(1) containing the extramembraneous catalytic core and F(0) containing the membrane proton channel, linked together by a central stalk and a peripheral stalk. During catalysis, ATP synthesis in the catalytic domain of F(1) is coupled via a rotary mechanism of the central stalk subunits to proton translocation. This protein is part of the stalk that links CF(0) to CF(1). It either transmits conformational changes from CF(0) to CF(1) or is implicated in proton conduction. This Prochlorococcus marinus (strain NATL2A) protein is ATP synthase subunit delta.